The sequence spans 289 residues: MAEITAAMVKELRERTGLGMMECKKALTAAGGDIEKAIDDMRAAGAIKAAKKAGNIAAEGSIAVKIAADNKAAVIIEVNSQTDFLALQDDFKGFVAESLEKAFNEKLTDAAPLVEAREEARLALVAKTGENVNIRRLTRVEGDVVGAYLHGHRIGVVVNLKGGNPELAKDIAMHVAASNPQFLSASEVSEEAIAKEKEIFLALNADKIAGKPENIVENMVKGRISKFLAEASLVEQPFVKNPEVKVGDLAKQAGAEIVSFVRYEVGEGIEKAEVDFAAEVAAQVAATKQ.

Positions 82–85 (TDFL) are involved in Mg(2+) ion dislocation from EF-Tu.

This sequence belongs to the EF-Ts family.

It localises to the cytoplasm. In terms of biological role, associates with the EF-Tu.GDP complex and induces the exchange of GDP to GTP. It remains bound to the aminoacyl-tRNA.EF-Tu.GTP complex up to the GTP hydrolysis stage on the ribosome. The protein is Elongation factor Ts of Pseudomonas paraeruginosa (strain DSM 24068 / PA7) (Pseudomonas aeruginosa (strain PA7)).